The sequence spans 947 residues: Bromodomain testis-specific protein (947 aa).

Positions 27-133 (RLTNQLQYLQ…KLFVQKLSQM (107 aa)) constitute a Bromo 1 domain. Residue Ser-187 is modified to Phosphoserine. Residues 209-220 (KGVKRKADTTTP) carry the Nuclear localization signal motif. Residues 267–376 (VKVTEQLRHC…DVFETHFSKI (110 aa)) enclose the Bromo 2 domain. Disordered regions lie at residues 395–421 (ETTG…ERVQ), 444–512 (PFRK…PMNY), 610–690 (NNQL…VKKM), and 849–873 (HLEQ…GLTV). The segment covering 403 to 413 (NEASSEGNSSG) has biased composition (low complexity). Residues 417–470 (DERVQRLAKLQEQLKAVHQQLQVLSQVPFRKLNKKKEKSKKEKKKEKVNNSNEN) are a coiled coil. Positions 447-462 (KLNKKKEKSKKEKKKE) are enriched in basic residues. Over residues 470–481 (NPRKMCEQMRLK) the composition is skewed to basic and acidic residues. Residues 482 to 494 (EKSKRNQPKKRKQ) are compositionally biased toward basic residues. The region spanning 500 to 582 (KSEDEDNAKP…ACLRKRPLKP (83 aa)) is the NET domain. A compositionally biased stretch (low complexity) spans 631 to 668 (VGSVSRLSESSSSSSSSSESESSSSDLSSSDSSGSESE). Composition is skewed to basic and acidic residues over residues 674 to 690 (TEVK…VKKM) and 849 to 865 (HLEQ…ENQR).

The protein belongs to the BET family. As to quaternary structure, interacts with SMARCE1. Interacts with mRNA splicing machinery proteins SRSF2, DDX5, HNRNPK and TARDBP. Interacts with the acetylated N-terminus of histone H1, H2, H3 and H4. Interacts with P-TEFb components CDK9 and CCNT1/cyclin-T1. Ubiquitinated in a SPOP-dependent manner, leading to proteasomal degradation.

The protein localises to the nucleus. Functionally, testis-specific chromatin protein that specifically binds histone H4 acetylated at 'Lys-5' and 'Lys-8' (H4K5ac and H4K8ac, respectively) and plays a key role in spermatogenesis. Required in late pachytene spermatocytes: plays a role in meiotic and post-meiotic cells by binding to acetylated histones at the promoter of specific meiotic and post-meiotic genes, facilitating their activation at the appropriate time. In the post-meiotic phase of spermatogenesis, binds to hyperacetylated histones and participates in their general removal from DNA. Also recognizes and binds a subset of butyrylated histones: able to bind histone H4 butyrylated at 'Lys-8' (H4K8ac), while it is not able to bind H4 butyrylated at 'Lys-5' (H4K5ac). Also acts as a component of the splicing machinery in pachytene spermatocytes and round spermatids and participates in 3'-UTR truncation of specific mRNAs in post-meiotic spermatids. Required for chromocenter organization, a structure comprised of peri-centromeric heterochromatin. This is Bromodomain testis-specific protein (BRDT) from Macaca fascicularis (Crab-eating macaque).